The primary structure comprises 181 residues: MKASISIDEKKDFIRWFLNKHQMKTREAMWVLNYIAGHDQIVKYVHFVDNLEGCARGLSLSAHGVESEPFLFFKGNIMTTDPEKAFHDIRLNWDEELYVELHFEEAMSSPEYALVREDNPFTAVKLADEEKEMADALIYQSVHQFSREKVLQQIDEALDTRDEAAFHKLVRILQQMDTEKE.

It belongs to the UPF0302 family.

The sequence is that of UPF0302 protein LMOf2365_1950 from Listeria monocytogenes serotype 4b (strain F2365).